A 481-amino-acid polypeptide reads, in one-letter code: Glutamyl-tRNA(Gln) amidotransferase subunit A (481 aa).

Residues Lys78 and Ser153 each act as charge relay system in the active site. The active-site Acyl-ester intermediate is the Ser177.

It belongs to the amidase family. GatA subfamily. As to quaternary structure, heterotrimer of A, B and C subunits.

The catalysed reaction is L-glutamyl-tRNA(Gln) + L-glutamine + ATP + H2O = L-glutaminyl-tRNA(Gln) + L-glutamate + ADP + phosphate + H(+). Allows the formation of correctly charged Gln-tRNA(Gln) through the transamidation of misacylated Glu-tRNA(Gln) in organisms which lack glutaminyl-tRNA synthetase. The reaction takes place in the presence of glutamine and ATP through an activated gamma-phospho-Glu-tRNA(Gln). The chain is Glutamyl-tRNA(Gln) amidotransferase subunit A from Borrelia garinii subsp. bavariensis (strain ATCC BAA-2496 / DSM 23469 / PBi) (Borreliella bavariensis).